The sequence spans 131 residues: uncharacterized protein (131 aa).

The HTH hxlR-type domain occupies 26–124; that stretch reads CSVEVAVNEI…WGKMYGSHQE (99 aa).

This is an uncharacterized protein from Methanothermobacter thermautotrophicus (strain ATCC 29096 / DSM 1053 / JCM 10044 / NBRC 100330 / Delta H) (Methanobacterium thermoautotrophicum).